The following is a 312-amino-acid chain: ADP-L-glycero-D-manno-heptose-6-epimerase (312 aa).

Residues 10-11 (FI), 31-32 (DN), lysine 38, lysine 53, 75-79 (EGACS), and asparagine 92 contribute to the NADP(+) site. The active-site Proton acceptor is tyrosine 140. An NADP(+)-binding site is contributed by lysine 144. Asparagine 169 lines the substrate pocket. NADP(+)-binding residues include valine 170 and lysine 178. Residue lysine 178 is the Proton acceptor of the active site. Substrate is bound by residues serine 180, histidine 187, 201 to 204 (FAGS), arginine 209, and tyrosine 274.

Belongs to the NAD(P)-dependent epimerase/dehydratase family. HldD subfamily. Homopentamer. NADP(+) is required as a cofactor.

The enzyme catalyses ADP-D-glycero-beta-D-manno-heptose = ADP-L-glycero-beta-D-manno-heptose. It functions in the pathway nucleotide-sugar biosynthesis; ADP-L-glycero-beta-D-manno-heptose biosynthesis; ADP-L-glycero-beta-D-manno-heptose from D-glycero-beta-D-manno-heptose 7-phosphate: step 4/4. Its pathway is bacterial outer membrane biogenesis; LPS core biosynthesis. Functionally, catalyzes the interconversion between ADP-D-glycero-beta-D-manno-heptose and ADP-L-glycero-beta-D-manno-heptose via an epimerization at carbon 6 of the heptose. This chain is ADP-L-glycero-D-manno-heptose-6-epimerase, found in Photorhabdus laumondii subsp. laumondii (strain DSM 15139 / CIP 105565 / TT01) (Photorhabdus luminescens subsp. laumondii).